We begin with the raw amino-acid sequence, 221 residues long: Ras-related protein Rab-28 (221 aa).

Position 2 is an N-acetylserine (Ser2). Ser8 carries the phosphoserine modification. GTP is bound by residues Gly21, Gly24, Lys25, Thr26, Ser27, Gly38, Lys39, Tyr41, and Thr44. Thr26 lines the Mg(2+) pocket. Residues 35–49 (ETFGKQYKQTIGLDF) form a switch I region. Residues Thr44 and Asp68 each contribute to the Mg(2+) site. The tract at residues 68–85 (DIGGQTIGGKMLDKYIYG) is switch II. GTP contacts are provided by Gly71, Asn129, Lys130, Asp132, Ala160, and Lys161. The residue at position 218 (Cys218) is a Cysteine methyl ester. Cys218 is lipidated: S-farnesyl cysteine. A propeptide spans 219 to 221 (AVQ) (removed in mature form).

This sequence belongs to the small GTPase superfamily. Rab family. As to quaternary structure, interacts (prenylated form) with PDE6D; the interaction promotes RAB28 delivery to the photoreceptor outer segments. Interacts with KCNJ13; the interaction may facilitate cone outer segments phagocytosis. Interacts with RELA; the interaction contributes to RELA transport from cytoplasm to nucleus. It depends on Mg(2+) as a cofactor. Post-translationally, isoprenylated. As to expression, testis, brain, and to much lower levels heart, skeletal muscle and fat cells. Expressed in the retina.

The protein localises to the cell membrane. The protein resides in the cytoplasm. Its subcellular location is the cytoskeleton. It localises to the cilium basal body. It is found in the nucleus. The catalysed reaction is GTP + H2O = GDP + phosphate + H(+). Regulated by guanine nucleotide exchange factors (GEFs) which promote the exchange of bound GDP for free GTP. Regulated by GTPase activating proteins (GAPs) which increase the GTP hydrolysis activity. Inhibited by GDP dissociation inhibitors (GDIs). Its function is as follows. The small GTPases Rab are key regulators of intracellular membrane trafficking, from the formation of transport vesicles to their fusion with membranes. Rabs cycle between an inactive GDP-bound form and an active GTP-bound form that is able to recruit to membranes different sets of downstream effectors directly responsible for vesicle formation, movement, tethering and fusion. RAB28 is required for shedding and phagocytosis of cone cell outer segments (OS) discs in the retina. Also participates in nuclear factor kappa-B p65/RELA nuclear transport in endothelial cells. The protein is Ras-related protein Rab-28 of Rattus norvegicus (Rat).